A 92-amino-acid chain; its full sequence is Large ribosomal subunit protein uL24c (92 aa).

It belongs to the universal ribosomal protein uL24 family. Part of the 50S ribosomal subunit.

It is found in the plastid. The protein resides in the chloroplast. One of two assembly initiator proteins, it binds directly to the 5'-end of the 23S rRNA, where it nucleates assembly of the 50S subunit. The sequence is that of Large ribosomal subunit protein uL24c (rpl24) from Gracilaria tenuistipitata var. liui (Red alga).